Reading from the N-terminus, the 447-residue chain is Tubulin beta-1 chain (447 aa).

Residues Gln-11, Glu-69, Ser-138, Gly-142, Thr-143, Gly-144, Asn-204, and Asn-226 each contribute to the GTP site. Glu-69 provides a ligand contact to Mg(2+). Residues 424–447 (QYQDATAEEEGEGDEEEAEGEAAA) are disordered. The span at 429 to 447 (TAEEEGEGDEEEAEGEAAA) shows a compositional bias: acidic residues.

Belongs to the tubulin family. As to quaternary structure, dimer of alpha and beta chains. A typical microtubule is a hollow water-filled tube with an outer diameter of 25 nm and an inner diameter of 15 nM. Alpha-beta heterodimers associate head-to-tail to form protofilaments running lengthwise along the microtubule wall with the beta-tubulin subunit facing the microtubule plus end conferring a structural polarity. Microtubules usually have 13 protofilaments but different protofilament numbers can be found in some organisms and specialized cells. The cofactor is Mg(2+).

It localises to the cytoplasm. It is found in the cytoskeleton. Functionally, tubulin is the major constituent of microtubules, a cylinder consisting of laterally associated linear protofilaments composed of alpha- and beta-tubulin heterodimers. Microtubules grow by the addition of GTP-tubulin dimers to the microtubule end, where a stabilizing cap forms. Below the cap, tubulin dimers are in GDP-bound state, owing to GTPase activity of alpha-tubulin. The polypeptide is Tubulin beta-1 chain (TUBB1) (Cyanophora paradoxa).